Here is a 171-residue protein sequence, read N- to C-terminus: MTKQNAFTREDLLRCSRGELFGPGNAQLPAPNMLMVDRITLISEEGGKYGKGELVAELDINPDLWFFACHFEGDPVMPGCLGLDAMWQLVGFFLGWQGLPGRGRALGSGEVKFFGQVLPTAKKVTYNIHIKRVLKGKLNLAIADGSVTVDGREIYTAEGLRVGVFTSTDNF.

Histidine 70 is a catalytic residue.

The protein belongs to the thioester dehydratase family. FabA subfamily. In terms of assembly, homodimer.

It localises to the cytoplasm. The catalysed reaction is a (3R)-hydroxyacyl-[ACP] = a (2E)-enoyl-[ACP] + H2O. It carries out the reaction (3R)-hydroxydecanoyl-[ACP] = (2E)-decenoyl-[ACP] + H2O. It catalyses the reaction (2E)-decenoyl-[ACP] = (3Z)-decenoyl-[ACP]. The protein operates within lipid metabolism; fatty acid biosynthesis. Functionally, necessary for the introduction of cis unsaturation into fatty acids. Catalyzes the dehydration of (3R)-3-hydroxydecanoyl-ACP to E-(2)-decenoyl-ACP and then its isomerization to Z-(3)-decenoyl-ACP. Can catalyze the dehydratase reaction for beta-hydroxyacyl-ACPs with saturated chain lengths up to 16:0, being most active on intermediate chain length. This Pseudomonas fluorescens (strain Pf0-1) protein is 3-hydroxydecanoyl-[acyl-carrier-protein] dehydratase.